Here is a 967-residue protein sequence, read N- to C-terminus: MRRIETMKGLFFCLGMVVFMLLGSVSPMNNEGKALMAIKASFSNVANMLLDWDDVHNHDFCSWRGVFCDNVSLNVVSLNLSNLNLGGEISSALGDLMNLQSIDLQGNKLGGQIPDEIGNCVSLAYVDFSTNLLFGDIPFSISKLKQLEFLNLKNNQLTGPIPATLTQIPNLKTLDLARNQLTGEIPRLLYWNEVLQYLGLRGNMLTGTLSPDMCQLTGLWYFDVRGNNLTGTIPESIGNCTSFEILDVSYNQITGVIPYNIGFLQVATLSLQGNKLTGRIPEVIGLMQALAVLDLSDNELTGPIPPILGNLSFTGKLYLHGNKLTGQIPPELGNMSRLSYLQLNDNELVGKIPPELGKLEQLFELNLANNNLVGLIPSNISSCAALNQFNVHGNFLSGAVPLEFRNLGSLTYLNLSSNSFKGKIPAELGHIINLDTLDLSGNNFSGSIPLTLGDLEHLLILNLSRNHLNGTLPAEFGNLRSIQIIDVSFNFLAGVIPTELGQLQNINSLILNNNKIHGKIPDQLTNCFSLANLNISFNNLSGIIPPMKNFTRFSPASFFGNPFLCGNWVGSICGPSLPKSQVFTRVAVICMVLGFITLICMIFIAVYKSKQQKPVLKGSSKQPEGSTKLVILHMDMAIHTFDDIMRVTENLDEKYIIGYGASSTVYKCTSKTSRPIAIKRIYNQYPSNFREFETELETIGSIRHRNIVSLHGYALSPFGNLLFYDYMENGSLWDLLHGPGKKVKLDWETRLKIAVGAAQGLAYLHHDCTPRIIHRDIKSSNILLDGNFEARLSDFGIAKSIPATKTYASTYVLGTIGYIDPEYARTSRLNEKSDIYSFGIVLLELLTGKKAVDNEANLHQMILSKADDNTVMEAVDAEVSVTCMDSGHIKKTFQLALLCTKRNPLERPTMQEVSRVLLSLVPSPPPKKLPSPAKVQEGEERRESHSSDTTTPQWFVQFREDISKSSL.

The signal sequence occupies residues 1 to 27; sequence MRRIETMKGLFFCLGMVVFMLLGSVSP. Residues 28 to 585 lie on the Extracellular side of the membrane; that stretch reads MNNEGKALMA…SLPKSQVFTR (558 aa). Asn70 and Asn79 each carry an N-linked (GlcNAc...) asparagine glycan. 20 LRR repeats span residues 74 to 97, 98 to 120, 122 to 145, 146 to 166, 170 to 192, 194 to 216, 218 to 240, 242 to 261, 265 to 287, 289 to 311, 313 to 335, 337 to 359, 361 to 382, 385 to 406, 409 to 431, 433 to 456, 457 to 479, 481 to 503, 505 to 527, and 529 to 550; these read NVVS…GDLM, NLQS…IGNC, SLAY…SKLK, QLEF…ATLT, NLKT…LYWN, VLQY…MCQL, GLWY…IGNC, SFEI…PYNI, QVAT…IGLM, ALAV…LGNL, FTGK…LGNM, RLSY…LGKL, QLFE…NISS, ALNQ…EFRN, SLTY…LGHI, NLDT…GDLE, HLLI…FGNL, SIQI…LGQL, NINS…LTNC, and SLAN…MKNF. N-linked (GlcNAc...) asparagine glycosylation is found at Asn228 and Asn239. N-linked (GlcNAc...) asparagine glycans are attached at residues Asn310 and Asn334. Asn379 carries N-linked (GlcNAc...) asparagine glycosylation. 4 N-linked (GlcNAc...) asparagine glycosylation sites follow: Asn414, Asn443, Asn462, and Asn469. Asn534, Asn539, and Asn549 each carry an N-linked (GlcNAc...) asparagine glycan. Residues 586–606 form a helical membrane-spanning segment; sequence VAVICMVLGFITLICMIFIAV. The Cytoplasmic portion of the chain corresponds to 607-967; the sequence is YKSKQQKPVL…FREDISKSSL (361 aa). Phosphothreonine occurs at positions 640 and 648. The 271-residue stretch at 651–921 folds into the Protein kinase domain; that stretch reads LDEKYIIGYG…EVSRVLLSLV (271 aa). Residues 657–665 and Lys679 each bind ATP; that span reads IGYGASSTV. Phosphotyrosine is present on residues Tyr724 and Tyr763. Catalysis depends on Asp776, which acts as the Proton acceptor. Residue Tyr818 is modified to Phosphotyrosine. The residue at position 826 (Thr826) is a Phosphothreonine. The disordered stretch occupies residues 921–955; sequence VPSPPPKKLPSPAKVQEGEERRESHSSDTTTPQWF. Residues 936-946 show a composition bias toward basic and acidic residues; the sequence is QEGEERRESHS.

The protein belongs to the protein kinase superfamily. Ser/Thr protein kinase family. As to expression, mostly expressed in developing organs, including bud clusters, flowers, siliques and young rosettes. Also detected in mature aboveground organs, such as leaves, stems and pedicels, but barely in roots.

Its subcellular location is the membrane. It carries out the reaction L-seryl-[protein] + ATP = O-phospho-L-seryl-[protein] + ADP + H(+). The catalysed reaction is L-threonyl-[protein] + ATP = O-phospho-L-threonyl-[protein] + ADP + H(+). In terms of biological role, receptor kinase that regulates inflorescence architecture and organ shape as well as stomatal patterning, including density and clustering, together with ERL1 and ER. This chain is LRR receptor-like serine/threonine-protein kinase ERL2 (ERL2), found in Arabidopsis thaliana (Mouse-ear cress).